The primary structure comprises 86 residues: UPF0457 protein SSP0714 (86 aa).

Belongs to the UPF0457 family.

The chain is UPF0457 protein SSP0714 from Staphylococcus saprophyticus subsp. saprophyticus (strain ATCC 15305 / DSM 20229 / NCIMB 8711 / NCTC 7292 / S-41).